We begin with the raw amino-acid sequence, 299 residues long: Taste receptor type 2 member 5 (299 aa).

M1 is a topological domain (extracellular). A helical transmembrane segment spans residues 2 to 22; sequence LSAGLGLLMLVAVVEFLIGLI. At 23–45 the chain is on the cytoplasmic side; sequence GNGVLVVWSFREWMRKFNWSSYN. A helical membrane pass occupies residues 46–66; sequence LIILGLAGCRFLLQWLIILDL. The Extracellular segment spans residues 67 to 82; that stretch reads SLFPLFQSSRWLRYLS. A helical membrane pass occupies residues 83–103; sequence IFWVLVSQASLWFATFLSVFY. Over 104–127 the chain is Cytoplasmic; it reads CKKITTFDRPAYLWLKQRAYNLSL. A helical membrane pass occupies residues 128–148; it reads WCLLGYFIINLLLTVQIGLMF. The Extracellular segment spans residues 149–175; the sequence is YHPPQGNSSIRYPFESWQYLYAFRLNS. An N-linked (GlcNAc...) asparagine glycan is attached at N155. The chain crosses the membrane as a helical span at residues 176 to 196; that stretch reads GSYLPLMVFLVSSGMLIVSLY. The Cytoplasmic segment spans residues 197–223; the sequence is THHKKMKVHSAGRRDVRAKAHITALKS. A helical transmembrane segment spans residues 224–244; sequence LGCFLFLHLVYIMASPFSITS. Residues 245–253 are Extracellular-facing; sequence KTYPPDLTS. The chain crosses the membrane as a helical span at residues 254 to 274; sequence VFIWETLMAAYPSLHSLILIM. Residues 275–299 lie on the Cytoplasmic side of the membrane; the sequence is GIPRVKQTCQKILWKTVCARRCWGP.

The protein belongs to the G-protein coupled receptor T2R family.

The protein localises to the membrane. Its function is as follows. Receptor that may play a role in the perception of bitterness and is gustducin-linked. May play a role in sensing the chemical composition of the gastrointestinal content. The activity of this receptor may stimulate alpha gustducin, mediate PLC-beta-2 activation and lead to the gating of TRPM5. The sequence is that of Taste receptor type 2 member 5 (TAS2R5) from Gorilla gorilla gorilla (Western lowland gorilla).